The primary structure comprises 384 residues: tRNA-specific 2-thiouridylase MnmA (384 aa).

ATP contacts are provided by residues 30–37 and Met56; that span reads GMSGGVDS. Positions 116–118 are interaction with target base in tRNA; that stretch reads NPD. Cys121 acts as the Nucleophile in catalysis. Cysteines 121 and 218 form a disulfide. Residue Gly146 coordinates ATP. Residues 168–170 form an interaction with tRNA region; the sequence is KDQ. The active-site Cysteine persulfide intermediate is the Cys218. Positions 330–331 are interaction with tRNA; the sequence is RY.

It belongs to the MnmA/TRMU family.

It localises to the cytoplasm. The catalysed reaction is S-sulfanyl-L-cysteinyl-[protein] + uridine(34) in tRNA + AH2 + ATP = 2-thiouridine(34) in tRNA + L-cysteinyl-[protein] + A + AMP + diphosphate + H(+). Its function is as follows. Catalyzes the 2-thiolation of uridine at the wobble position (U34) of tRNA, leading to the formation of s(2)U34. The protein is tRNA-specific 2-thiouridylase MnmA of Haemophilus ducreyi (strain 35000HP / ATCC 700724).